We begin with the raw amino-acid sequence, 213 residues long: BREX protein BrxA (213 aa).

It belongs to the BrxA family.

Functionally, BREX systems (bacteriophage exclusion) provide immunity against bacteriophage. A probably non-essential part of a type 1 BREX system which protects against dsDNA phage. This system allows phage adsorption but prevents phage DNA replication, without degradation of the phage DNA. Methylation of bacterial DNA by PglX guides self/non-self discrimination. When the brxA-brxB-brxC-pglX-pglZ-brxL genes are transformed into a susceptible E.coli strain (BW25113) they confer very high resistance to infection by bacteriophage VR7 and VpaE1, about 100-fold protection against lambda, T5 and T7 and no protection against RNA phage Qbeta, ssDNA phage M13 or dSDNA phage T4 and VR5. Glycosylated phage DNA is not susceptible to BREX. The BREX system does not confer resistance to lysogenic lambda phage, i.e. prophage that are integrated into the chromosomal DNA and then induced to form phage. The sequence is that of BREX protein BrxA from Escherichia coli O9:H4 (strain HS).